The chain runs to 121 residues: Small ribosomal subunit protein bS6 (121 aa).

It belongs to the bacterial ribosomal protein bS6 family.

Its function is as follows. Binds together with bS18 to 16S ribosomal RNA. The sequence is that of Small ribosomal subunit protein bS6 from Rickettsia felis (strain ATCC VR-1525 / URRWXCal2) (Rickettsia azadi).